Here is an 858-residue protein sequence, read N- to C-terminus: MVNFTVDQIRSIMDKKANIRNMSVIAHVDHGKSTLTDSLVCKAGIIASARAGETRFTDTRKDEQERCITIKSTAISLFYELSENDLAFIKQSKDGCGFLINLIDSPGHVDFSSEVTAALRVTDGALVVVDCVSGVCVQTETVLRQAIAERIRPVLMMNKMDRALLELQLEPEALYQTFQRIVENVNVIISTYGEGESGPMGNIMIDPVLGTVGFGSGLHGWAFTLKQFAEMYVAKFAAKGEGQLAPSERCKKVEDMMKKLWGDRYFDPSNGKFSKSAVNADGKKLPRTFCQLILDPIFKVFDAIMNFKKEETAKLIEKLDIKLDSEDKDKEGKQLLKSVMRRWLPAGEALLQMITIHLPSPVTAQKYRCELLYEGPPDDEAAMGVKNCDPKGPLMMYISKMVPTTDKGRFYAFGRVFSGVVSTGLKVRIMGPNFTPGKKEDLYIKPIQRTILMMGRYVEPIEDVPCGNIVGLVGVDQYLVKTGTISTFEHAHNMRVMKFSVSPVVRVAVEAKNPADLPKLVEGLKRLAKSDPMVQCIIEESGEHIIAGAGELHLEICLKDLEEDHACIPIKKSDPVVSYRETVSEESSQMCLSKSPNKHNRLFMKARPFPDGLAEDIDKGDVSARQELKTRARYLAEKYEWDVTEARKIWCFGPDGSGPNILTDVTKGVQYLNEIKDSVVAGFQWATKEGVLCEENLRGVRFDVHDVTLHADAIHRGGGQIIPTARRVLYACVLTAQPRLMEPIYLVEIQCPEQVVGGIYGVLNRKRGHVFEESQVAGTPMFVVKAYLPVNESFGFTADLRSNTGGQAFPQCVFDHWQILPGDPFDNTTRPSQVVAETRKRKGLKEGVSALDNFLDKL.

Residues 17–362 (ANIRNMSVIA…MITIHLPSPV (346 aa)) enclose the tr-type G domain. GTP contacts are provided by residues 26 to 33 (AHVDHGKS), 158 to 161 (NKMD), and 216 to 218 (SGL). Diphthamide is present on H715.

The protein belongs to the TRAFAC class translation factor GTPase superfamily. Classic translation factor GTPase family. EF-G/EF-2 subfamily. As to quaternary structure, binds to 80S ribosomes. Actively translating ribosomes show mutually exclusive binding of eIF5a (EIF5A or EIF5A2) and EEF2/eEF2. Interacts with serbp1; interaction sequesters eef2/eEF2 at the A-site of the ribosome, thereby blocking the interaction sites of the mRNA-tRNA complex, promoting ribosome stabilization and hibernation. Interacts with habp4; interaction takes place at the A-site of hibernating ribosomes and promotes ribosome stabilization.

It localises to the cytoplasm. The protein localises to the nucleus. The catalysed reaction is GTP + H2O = GDP + phosphate + H(+). Catalyzes the GTP-dependent ribosomal translocation step during translation elongation. During this step, the ribosome changes from the pre-translocational (PRE) to the post-translocational (POST) state as the newly formed A-site-bound peptidyl-tRNA and P-site-bound deacylated tRNA move to the P and E sites, respectively. Catalyzes the coordinated movement of the two tRNA molecules, the mRNA and conformational changes in the ribosome. The polypeptide is Elongation factor 2 (Xenopus laevis (African clawed frog)).